Here is a 488-residue protein sequence, read N- to C-terminus: MADVRKLKNYINGEWVESRADKYEDVINPATGEVLCQVPISTRAELDQAAVIAEQAFEKWSQVAVPRRARVLFSFQQLLIQHKEKLARLITLENGKNLSEARGEVQRGIENVEFAAGAPTLMMGDSLASIATDVEAANYRYPVGVVGGIAPFNFPMMVPCWMFPMAIALGNSFILKPSERTPLLMEKLVELFSEAGLPKGVFNVVYGAHDVVNGILENEIIKAVSFVGSKPVGEYVYKTGSANLKRVQALTGAKNHTIVLNDADLEDTVTNVISAAFGSAGERCMACAVVTVEEGIADEFLAALRTAAQNVKIGNGLDDGVFLGPVIREENQKRTIAYIEKGLEEGAKLTVDGRETGLSEGHFVGPTILEDVTTDMTIWKDEIFAPVLSVIRVKNLQEAVRVANQSEFANGACIFTNNAKAIRYFREKIDAGMLGVNLGVPAPMAFFPFSGWKSSFYGTLHANGKDSVDFYTHKKVVTARYSLKGYEE.

NAD(+) contacts are provided by Ala-150, Phe-152, Lys-176, Glu-179, Arg-180, Ser-229, and Thr-251. The active-site Nucleophile is the Cys-284. Glu-382 lines the NAD(+) pocket.

This sequence belongs to the aldehyde dehydrogenase family. IolA subfamily. As to quaternary structure, homotetramer.

It carries out the reaction 3-oxopropanoate + NAD(+) + CoA + H2O = hydrogencarbonate + acetyl-CoA + NADH + H(+). The enzyme catalyses 2-methyl-3-oxopropanoate + NAD(+) + CoA + H2O = propanoyl-CoA + hydrogencarbonate + NADH + H(+). It participates in polyol metabolism; myo-inositol degradation into acetyl-CoA; acetyl-CoA from myo-inositol: step 7/7. In terms of biological role, catalyzes the oxidation of malonate semialdehyde (MSA) and methylmalonate semialdehyde (MMSA) into acetyl-CoA and propanoyl-CoA, respectively. Is involved in a myo-inositol catabolic pathway. Bicarbonate, and not CO2, is the end-product of the enzymatic reaction. This Listeria monocytogenes serotype 4b (strain F2365) protein is Malonate-semialdehyde dehydrogenase.